A 329-amino-acid chain; its full sequence is Phenylalanine--tRNA ligase alpha subunit (329 aa).

Glu246 serves as a coordination point for Mg(2+).

The protein belongs to the class-II aminoacyl-tRNA synthetase family. Phe-tRNA synthetase alpha subunit type 1 subfamily. As to quaternary structure, tetramer of two alpha and two beta subunits. The cofactor is Mg(2+).

It localises to the cytoplasm. It catalyses the reaction tRNA(Phe) + L-phenylalanine + ATP = L-phenylalanyl-tRNA(Phe) + AMP + diphosphate + H(+). This Helicobacter hepaticus (strain ATCC 51449 / 3B1) protein is Phenylalanine--tRNA ligase alpha subunit.